The following is a 507-amino-acid chain: MDAFVVFSLAFLAAWFIVVFPRWSDSRRRRGPGGELPPGPPPLPIVGNILQLRGDPHKSFAQLAKTYGPLMSLRLGTQFAVVVSSPEMATEILQKHGHAFSNRSIPDAINIHGHNEVSWNTMPADSTGWKRIRRVGREKLFSHQALQQTEGQRQERLRKLADHVRGFSEQGRVMNVGEATFTTMTDLVFSTLFSIDLTDYGATDSIANKEFKEHVNAFTRYIGVPNISDFFPIFAPLDPQGIRRKIGHHLGSLLAFVQSMIEERLRERKASTYQKKNDFLDTLLDISEEGNGYDDLSIKEIRHFCVDIIVAGSDTSAATTEWAMVELLLHPDKLAKLKAELKSFLGEKSLVEGSDISKLPYLQATIKEVFRFHPAAPLLGPREAVEETQINGYTIPKNAKIMVNFWAMTRDPSIWKNPESFEPERFLGKDIDYEGQHFELIPFGSGRRICPGMPLASRMLHCMVATLCHNFDWELEGGAESKQRQREDVFGLALQKKFPLRAKPIKV.

Residues 6–23 (VFSLAFLAAWFIVVFPRW) form a helical membrane-spanning segment. Residue Cys450 participates in heme binding.

The protein belongs to the cytochrome P450 family. It depends on heme as a cofactor. In terms of tissue distribution, expressed in glandular trichomes of young leaves.

It localises to the membrane. The catalysed reaction is 11-hydroxyferruginol + 3 reduced [NADPH--hemoprotein reductase] + 3 O2 = carnosate + 3 oxidized [NADPH--hemoprotein reductase] + 4 H2O + 4 H(+). The enzyme catalyses miltiradiene + 2 reduced [NADPH--hemoprotein reductase] + 2 O2 = miltiradien-20-al + 2 oxidized [NADPH--hemoprotein reductase] + 3 H2O + 2 H(+). It catalyses the reaction ferruginol + 3 reduced [NADPH--hemoprotein reductase] + 3 O2 = pisiferate + 3 oxidized [NADPH--hemoprotein reductase] + 4 H2O + 4 H(+). Its pathway is secondary metabolite biosynthesis; terpenoid biosynthesis. Monooxygenase involved in the biosynthesis of carnosate, a potent antioxidant labdane-related diterpene natural product. Catalyzes the oxidation of 11-hydroxyferruginol to produce carnosate. Mediates the conversion of miltiradien into miltiradien-20-al. Also involved in the production of pisiferic acid and derivative products from ferruginol. This is Carnosic acid synthase from Rosmarinus officinalis (Rosemary).